The chain runs to 336 residues: Dihydroorotate dehydrogenase (quinone) (336 aa).

FMN contacts are provided by residues 62 to 66 (AGLDK) and T86. K66 serves as a coordination point for substrate. 111-115 (NRMGF) contacts substrate. FMN is bound by residues N139 and N172. N172 contacts substrate. S175 functions as the Nucleophile in the catalytic mechanism. N177 contacts substrate. Residues K217 and T245 each contribute to the FMN site. Residue 246–247 (NT) coordinates substrate. Residues G268, G297, and 318-319 (YS) contribute to the FMN site.

It belongs to the dihydroorotate dehydrogenase family. Type 2 subfamily. Monomer. Requires FMN as cofactor.

The protein localises to the cell membrane. The catalysed reaction is (S)-dihydroorotate + a quinone = orotate + a quinol. It functions in the pathway pyrimidine metabolism; UMP biosynthesis via de novo pathway; orotate from (S)-dihydroorotate (quinone route): step 1/1. Catalyzes the conversion of dihydroorotate to orotate with quinone as electron acceptor. This is Dihydroorotate dehydrogenase (quinone) from Hamiltonella defensa subsp. Acyrthosiphon pisum (strain 5AT).